The chain runs to 397 residues: ATP phosphoribosyltransferase regulatory subunit (397 aa).

Belongs to the class-II aminoacyl-tRNA synthetase family. HisZ subfamily. Heteromultimer composed of HisG and HisZ subunits.

Its subcellular location is the cytoplasm. The protein operates within amino-acid biosynthesis; L-histidine biosynthesis; L-histidine from 5-phospho-alpha-D-ribose 1-diphosphate: step 1/9. In terms of biological role, required for the first step of histidine biosynthesis. May allow the feedback regulation of ATP phosphoribosyltransferase activity by histidine. The protein is ATP phosphoribosyltransferase regulatory subunit of Halalkalibacterium halodurans (strain ATCC BAA-125 / DSM 18197 / FERM 7344 / JCM 9153 / C-125) (Bacillus halodurans).